The sequence spans 376 residues: Putative F-box only protein 9 (376 aa).

The 44-residue stretch at 1-44 folds into the F-box domain; sequence MSDLPPDLVEDILSRVPATSLKRLRFTCKQWNSLFKNRRFTEKH.

The chain is Putative F-box only protein 9 (FBX9) from Arabidopsis thaliana (Mouse-ear cress).